The following is a 229-amino-acid chain: PKHD-type hydroxylase Rpal_3968 (229 aa).

The 103-residue stretch at 78-180 folds into the Fe2OG dioxygenase domain; that stretch reads QIFPPLFNRY…RVASFFWLQS (103 aa). Residues histidine 98, aspartate 100, and histidine 161 each coordinate Fe cation. Arginine 171 serves as a coordination point for 2-oxoglutarate.

It depends on Fe(2+) as a cofactor. L-ascorbate serves as cofactor.

This Rhodopseudomonas palustris (strain TIE-1) protein is PKHD-type hydroxylase Rpal_3968.